Here is a 227-residue protein sequence, read N- to C-terminus: LysM and putative peptidoglycan-binding domain-containing protein 1 (227 aa).

A compositionally biased stretch (pro residues) spans 1 to 11 (MASPSRQPPPG). The segment at 1–22 (MASPSRQPPPGGSGLLQGSRAR) is disordered. Residues Ser-23 and Ser-33 each carry the phosphoserine modification. A LysM domain is found at 40–84 (LEHQLEPGDTLAGLALKYGVTMEQIKRANRLYTNDSIFLKKTLYI). Residues 97 to 150 (LDSEEEKDGEEKVHPSNSEVWPHSTERKKQETGAGRANGEVLPTPGQETPTPIH) are disordered. Phosphoserine occurs at positions 99, 166, 194, and 212.

The sequence is that of LysM and putative peptidoglycan-binding domain-containing protein 1 (LYSMD1) from Homo sapiens (Human).